A 315-amino-acid chain; its full sequence is Gamma-hemolysin component C (315 aa).

The signal sequence occupies residues 1 to 29 (MLKNKILATTLSVSLLAPLANPLLENAKA).

It belongs to the aerolysin family. Toxicity requires sequential binding and synergistic association of a class S and a class F component which form heterooligomeric complexes. HlgC (class S) associates with HlgB (class F) thus forming an CB toxin.

Functionally, toxin that seems to act by forming pores in the membrane of the cell. Has a hemolytic and a leucotoxic activity. The sequence is that of Gamma-hemolysin component C (hlgC) from Staphylococcus aureus (strain MSSA476).